Reading from the N-terminus, the 153-residue chain is Nucleoside diphosphate kinase (153 aa).

ATP contacts are provided by lysine 11, phenylalanine 59, arginine 87, threonine 93, arginine 104, and asparagine 114. Histidine 117 serves as the catalytic Pros-phosphohistidine intermediate.

Belongs to the NDK family. Homotrimer. The cofactor is Mg(2+).

The catalysed reaction is a 2'-deoxyribonucleoside 5'-diphosphate + ATP = a 2'-deoxyribonucleoside 5'-triphosphate + ADP. The enzyme catalyses a ribonucleoside 5'-diphosphate + ATP = a ribonucleoside 5'-triphosphate + ADP. Its function is as follows. Major role in the synthesis of nucleoside triphosphates other than ATP. The ATP gamma phosphate is transferred to the NDP beta phosphate via a ping-pong mechanism, using a phosphorylated active-site intermediate. This Aspergillus fumigatus (strain ATCC MYA-4609 / CBS 101355 / FGSC A1100 / Af293) (Neosartorya fumigata) protein is Nucleoside diphosphate kinase (ndk1).